Consider the following 372-residue polypeptide: NAD(P)H-quinone oxidoreductase subunit 1 (372 aa).

The next 8 helical transmembrane spans lie at 27 to 47 (LLWIPLPMLLVLVSAVIGVLV), 97 to 117 (VLFTVGPILVLVPVILSWLIV), 128 to 148 (VGIGIFLWIALSSIQPIGLLM), 166 to 186 (AAQSISYEIPLALAVLAIVMM), 204 to 224 (FLSWNIWRQPVGFIIFWICAL), 266 to 286 (VLSALLVSVLYLGGWGFPISI), 308 to 328 (SLGIVMTILKAYLLVFLAILL), and 347 to 367 (FLLPISLVNLLVTASLKLAFP).

Belongs to the complex I subunit 1 family. As to quaternary structure, NDH-1 is composed of at least 11 different subunits.

The protein resides in the cellular thylakoid membrane. It carries out the reaction a plastoquinone + NADH + (n+1) H(+)(in) = a plastoquinol + NAD(+) + n H(+)(out). It catalyses the reaction a plastoquinone + NADPH + (n+1) H(+)(in) = a plastoquinol + NADP(+) + n H(+)(out). NDH-1 shuttles electrons from an unknown electron donor, via FMN and iron-sulfur (Fe-S) centers, to quinones in the respiratory and/or the photosynthetic chain. The immediate electron acceptor for the enzyme in this species is believed to be plastoquinone. Couples the redox reaction to proton translocation, and thus conserves the redox energy in a proton gradient. The sequence is that of NAD(P)H-quinone oxidoreductase subunit 1 from Prochlorococcus marinus (strain NATL2A).